The sequence spans 499 residues: Heparin cofactor 2 (499 aa).

Positions 1–19 (MKHSLNALLIFLIITSAWG) are cleaved as a signal peptide. Serine 37 carries the post-translational modification Phosphoserine; by FAM20C. N-linked (GlcNAc...) (complex) asparagine glycosylation occurs at asparagine 49. The interval 68-79 (DWIPEGEEDDDY) is chemotactic activity. 2 tandem repeats follow at residues 73 to 83 (GEEDDDYLDLE) and 87 to 97 (SEDDDYIDIVD). Residues 73–97 (GEEDDDYLDLEKIFSEDDDYIDIVD) are 2 X 11 AA approximate repeats, Asp/Glu-rich (acidic) (hirudin-like). Tyrosine 79 and tyrosine 92 each carry sulfotyrosine. Asparagine 188 is a glycosylation site (N-linked (GlcNAc...) asparagine). A glycosaminoglycan-binding site region spans residues 192-212 (KYEITTIHNLFRKLTHRLFRR). A glycan (N-linked (GlcNAc...) asparagine) is linked at asparagine 387.

It belongs to the serpin family. Phosphorylated by FAM20C in the extracellular medium. As to expression, expressed predominantly in liver. Also present in plasma. In terms of tissue distribution, expressed in plasma (at protein level). Expressed in liver.

Its function is as follows. Thrombin inhibitor activated by the glycosaminoglycans, heparin or dermatan sulfate. In the presence of the latter, HC-II becomes the predominant thrombin inhibitor in place of antithrombin III (AT-III). Also inhibits chymotrypsin, but in a glycosaminoglycan-independent manner. Functionally, peptides at the N-terminal of HC-II have chemotactic activity for both monocytes and neutrophils. In terms of biological role, shows negligible inhibition, in vitro, of thrombin and tPA and no inhibition of factor Xa, in vitro. The sequence is that of Heparin cofactor 2 (SERPIND1) from Homo sapiens (Human).